A 266-amino-acid chain; its full sequence is Ribonuclease HII (266 aa).

The tract at residues 19-38 is disordered; that stretch reads HPGMIRDKEKPAPTKPGKGV. The RNase H type-2 domain occupies 58–246; sequence WPVAGCDEAG…VVAARQKHQP (189 aa). A divalent metal cation is bound by residues Asp64, Glu65, and Asp155.

It belongs to the RNase HII family. It depends on Mn(2+) as a cofactor. Mg(2+) is required as a cofactor.

It is found in the cytoplasm. It carries out the reaction Endonucleolytic cleavage to 5'-phosphomonoester.. Its function is as follows. Endonuclease that specifically degrades the RNA of RNA-DNA hybrids. The sequence is that of Ribonuclease HII from Rhodopseudomonas palustris (strain BisB18).